A 102-amino-acid chain; its full sequence is Large ribosomal subunit protein uL23 (102 aa).

The protein belongs to the universal ribosomal protein uL23 family. In terms of assembly, part of the 50S ribosomal subunit. Contacts protein L29, and trigger factor when it is bound to the ribosome.

In terms of biological role, one of the early assembly proteins it binds 23S rRNA. One of the proteins that surrounds the polypeptide exit tunnel on the outside of the ribosome. Forms the main docking site for trigger factor binding to the ribosome. This Cutibacterium acnes (strain DSM 16379 / KPA171202) (Propionibacterium acnes) protein is Large ribosomal subunit protein uL23.